The following is a 376-amino-acid chain: Chaperone protein DnaJ (376 aa).

The region spanning 5–70 (DYYEVLGVGR…DKKAAYDQFG (66 aa)) is the J domain. The segment at 132–210 (GLTKELRIPT…CHGEGRVEKS (79 aa)) adopts a CR-type zinc-finger fold. Positions 145, 148, 162, 165, 184, 187, 198, and 201 each coordinate Zn(2+). CXXCXGXG motif repeat units lie at residues 145–152 (CDSCDGSG), 162–169 (CGTCHGQG), 184–191 (CPTCHGRG), and 198–205 (CNKCHGEG).

Belongs to the DnaJ family. Homodimer. It depends on Zn(2+) as a cofactor.

It is found in the cytoplasm. Participates actively in the response to hyperosmotic and heat shock by preventing the aggregation of stress-denatured proteins and by disaggregating proteins, also in an autonomous, DnaK-independent fashion. Unfolded proteins bind initially to DnaJ; upon interaction with the DnaJ-bound protein, DnaK hydrolyzes its bound ATP, resulting in the formation of a stable complex. GrpE releases ADP from DnaK; ATP binding to DnaK triggers the release of the substrate protein, thus completing the reaction cycle. Several rounds of ATP-dependent interactions between DnaJ, DnaK and GrpE are required for fully efficient folding. Also involved, together with DnaK and GrpE, in the DNA replication of plasmids through activation of initiation proteins. This Shewanella pealeana (strain ATCC 700345 / ANG-SQ1) protein is Chaperone protein DnaJ.